A 574-amino-acid chain; its full sequence is MSDKKKELRSRHWYGGTHKDGFIHRSWMKNQGFPDHVFDGRPIIGICNTWSELTPCNSHLRILAEGVKRGVWEAGGFPVEFPVSSLGETQMRPTAMLFRNLLAMDVEEAIRAYGIDGVVLLGGCDKTTPGQLMGAASVDLPTIVVSSGPMLNGKWKGKDIGSGTDVWKFSEAVRAGEMSLQEFMAAESGMSRSPGVCMTMGTATTMASIVEAMGLSLPTNAALPAVDARRMALSHMTGKRIVEMVHEDLRLSKILTKENFENGIIANAAVGGSTNAVVHMLAIAGRAGIDLCLEDFDRVGGQVPCIVNCMPSGKYLIEDLAYAGGLPAVMNRIQHLLHPDAPTVFGVPISKYWEAAEVYNDDVIRPLDNPLRAAAGIRVLKGNLAPNGAVIKPSAASEHLLAHEGPAYVFDTIEDLRAKIDDPDLPVTEDTILVLKGCGPKGYPGMAEVGNMPIPRRLVEKGVRDMVRISDARMSGTAFGTVVLHVSPEANAGGPLAIVRTGDRIRLDALKGELNLLVSEEELAARMAAWQPPEQKWHRGYYKLYHDTVLQADKGADLDFLVGKSGSEVLRESH.

[4Fe-4S] cluster-binding residues include Cys124 and Cys197.

Belongs to the IlvD/Edd family. [4Fe-4S] cluster serves as cofactor.

Functionally, involved in the degradation of galactose via the DeLey-Doudoroff pathway. This chain is Putative dehydratase IlvD1 (ilvD1), found in Rhizobium meliloti (strain 1021) (Ensifer meliloti).